An 86-amino-acid polypeptide reads, in one-letter code: uncharacterized protein (86 aa).

A helical transmembrane segment spans residues 63–85 (VGGRSPSIQNSFFFFFFFFFFFF).

Its subcellular location is the membrane. This is an uncharacterized protein from Dictyostelium discoideum (Social amoeba).